The following is a 446-amino-acid chain: Probable glycine dehydrogenase (decarboxylating) subunit 1 (446 aa).

It belongs to the GcvP family. N-terminal subunit subfamily. In terms of assembly, the glycine cleavage system is composed of four proteins: P, T, L and H. In this organism, the P 'protein' is a heterodimer of two subunits.

It carries out the reaction N(6)-[(R)-lipoyl]-L-lysyl-[glycine-cleavage complex H protein] + glycine + H(+) = N(6)-[(R)-S(8)-aminomethyldihydrolipoyl]-L-lysyl-[glycine-cleavage complex H protein] + CO2. Functionally, the glycine cleavage system catalyzes the degradation of glycine. The P protein binds the alpha-amino group of glycine through its pyridoxal phosphate cofactor; CO(2) is released and the remaining methylamine moiety is then transferred to the lipoamide cofactor of the H protein. The polypeptide is Probable glycine dehydrogenase (decarboxylating) subunit 1 (Desulforamulus reducens (strain ATCC BAA-1160 / DSM 100696 / MI-1) (Desulfotomaculum reducens)).